The primary structure comprises 281 residues: UPF0162 protein XF_1494 (281 aa).

2 TPR repeats span residues 193–226 (VRIL…VPNQ) and 227–260 (PEAL…YPST).

This sequence belongs to the UPF0162 family.

The chain is UPF0162 protein XF_1494 from Xylella fastidiosa (strain 9a5c).